Consider the following 230-residue polypeptide: Demethylmenaquinone methyltransferase (230 aa).

Residues threonine 62, aspartate 80, 100 to 101, and serine 117 contribute to the S-adenosyl-L-methionine site; that span reads DG.

This sequence belongs to the class I-like SAM-binding methyltransferase superfamily. MenG/UbiE family.

The enzyme catalyses a 2-demethylmenaquinol + S-adenosyl-L-methionine = a menaquinol + S-adenosyl-L-homocysteine + H(+). The protein operates within quinol/quinone metabolism; menaquinone biosynthesis; menaquinol from 1,4-dihydroxy-2-naphthoate: step 2/2. Its function is as follows. Methyltransferase required for the conversion of demethylmenaquinol (DMKH2) to menaquinol (MKH2). This chain is Demethylmenaquinone methyltransferase, found in Corynebacterium glutamicum (strain R).